Here is a 572-residue protein sequence, read N- to C-terminus: Proline--tRNA ligase (572 aa).

The protein belongs to the class-II aminoacyl-tRNA synthetase family. ProS type 1 subfamily. As to quaternary structure, homodimer.

The protein localises to the cytoplasm. It carries out the reaction tRNA(Pro) + L-proline + ATP = L-prolyl-tRNA(Pro) + AMP + diphosphate. Functionally, catalyzes the attachment of proline to tRNA(Pro) in a two-step reaction: proline is first activated by ATP to form Pro-AMP and then transferred to the acceptor end of tRNA(Pro). As ProRS can inadvertently accommodate and process non-cognate amino acids such as alanine and cysteine, to avoid such errors it has two additional distinct editing activities against alanine. One activity is designated as 'pretransfer' editing and involves the tRNA(Pro)-independent hydrolysis of activated Ala-AMP. The other activity is designated 'posttransfer' editing and involves deacylation of mischarged Ala-tRNA(Pro). The misacylated Cys-tRNA(Pro) is not edited by ProRS. The protein is Proline--tRNA ligase of Haemophilus influenzae (strain PittEE).